Reading from the N-terminus, the 280-residue chain is Formamidopyrimidine-DNA glycosylase (280 aa).

Pro-2 functions as the Schiff-base intermediate with DNA in the catalytic mechanism. The Proton donor role is filled by Glu-3. Catalysis depends on Lys-60, which acts as the Proton donor; for beta-elimination activity. DNA is bound by residues His-93 and Arg-112. An FPG-type zinc finger spans residues 240-274; that stretch reads YVYGQHSKPCRVCGADIIKIKVGGRGTHLCPTCQP. Arg-264 functions as the Proton donor; for delta-elimination activity in the catalytic mechanism.

It belongs to the FPG family. As to quaternary structure, monomer. The cofactor is Zn(2+).

The catalysed reaction is Hydrolysis of DNA containing ring-opened 7-methylguanine residues, releasing 2,6-diamino-4-hydroxy-5-(N-methyl)formamidopyrimidine.. The enzyme catalyses 2'-deoxyribonucleotide-(2'-deoxyribose 5'-phosphate)-2'-deoxyribonucleotide-DNA = a 3'-end 2'-deoxyribonucleotide-(2,3-dehydro-2,3-deoxyribose 5'-phosphate)-DNA + a 5'-end 5'-phospho-2'-deoxyribonucleoside-DNA + H(+). Involved in base excision repair of DNA damaged by oxidation or by mutagenic agents. Acts as a DNA glycosylase that recognizes and removes damaged bases. Has a preference for oxidized purines, such as 7,8-dihydro-8-oxoguanine (8-oxoG). Has AP (apurinic/apyrimidinic) lyase activity and introduces nicks in the DNA strand. Cleaves the DNA backbone by beta-delta elimination to generate a single-strand break at the site of the removed base with both 3'- and 5'-phosphates. The chain is Formamidopyrimidine-DNA glycosylase from Oceanobacillus iheyensis (strain DSM 14371 / CIP 107618 / JCM 11309 / KCTC 3954 / HTE831).